We begin with the raw amino-acid sequence, 487 residues long: 3-octaprenyl-4-hydroxybenzoate carboxy-lyase (487 aa).

Asn-172 provides a ligand contact to Mn(2+). Prenylated FMN is bound by residues 175 to 177 (IYR), 189 to 191 (RWL), and 194 to 195 (RG). Residue Glu-238 coordinates Mn(2+). Asp-287 functions as the Proton donor in the catalytic mechanism.

It belongs to the UbiD family. As to quaternary structure, homohexamer. Prenylated FMN is required as a cofactor. Requires Mn(2+) as cofactor.

The protein localises to the cell membrane. The catalysed reaction is a 4-hydroxy-3-(all-trans-polyprenyl)benzoate + H(+) = a 2-(all-trans-polyprenyl)phenol + CO2. It functions in the pathway cofactor biosynthesis; ubiquinone biosynthesis. Its function is as follows. Catalyzes the decarboxylation of 3-octaprenyl-4-hydroxy benzoate to 2-octaprenylphenol, an intermediate step in ubiquinone biosynthesis. The polypeptide is 3-octaprenyl-4-hydroxybenzoate carboxy-lyase (Actinobacillus pleuropneumoniae serotype 5b (strain L20)).